A 71-amino-acid polypeptide reads, in one-letter code: DNA-directed RNA polymerase subunit epsilon (71 aa).

It belongs to the RNA polymerase subunit epsilon family. In terms of assembly, RNAP is composed of a core of 2 alpha, a beta and a beta' subunit. The core is associated with a delta subunit, and at least one of epsilon or omega. When a sigma factor is associated with the core the holoenzyme is formed, which can initiate transcription.

The enzyme catalyses RNA(n) + a ribonucleoside 5'-triphosphate = RNA(n+1) + diphosphate. Its function is as follows. A non-essential component of RNA polymerase (RNAP). The chain is DNA-directed RNA polymerase subunit epsilon from Anoxybacillus flavithermus (strain DSM 21510 / WK1).